Here is a 147-residue protein sequence, read N- to C-terminus: Large ribosomal subunit protein uL16 (147 aa).

The protein belongs to the universal ribosomal protein uL16 family. Part of the 50S ribosomal subunit.

Its function is as follows. Binds 23S rRNA and is also seen to make contacts with the A and possibly P site tRNAs. The chain is Large ribosomal subunit protein uL16 from Caldicellulosiruptor bescii (strain ATCC BAA-1888 / DSM 6725 / KCTC 15123 / Z-1320) (Anaerocellum thermophilum).